The following is a 1303-amino-acid chain: Ninein-like protein (1303 aa).

EF-hand domains are found at residues 8 to 43 and 61 to 77; these read RYVAQLKDEFDSCDTTGTGYLDKEELTALCHKLSLD and RVNFEEFKEGFVAVLSR. A disordered region spans residues 107–135; sequence TKRYGRRSRPDKTDLELTADSDSLPFGTD. EF-hand domains are found at residues 203-238 and 240-275; these read VTDGQVRAVWEELGVGAAGSLNREELSLVCDHIGLK and LEAEELDALFRKLDKDQDGKVSLIEFQSGLFKPHDH. Ca(2+)-binding residues include Asp-253, Asp-255, Asp-257, Lys-259, and Glu-264. Residues 464 to 590 are a coiled coil; the sequence is EYESEVLLEQ…CSELELLKSQ (127 aa). Polar residues predominate over residues 592–617; it reads SGKRTRLSRSSLPANDWSNRRALTTE. Positions 592 to 634 are disordered; sequence SGKRTRLSRSSLPANDWSNRRALTTESDSDDPEMKKGTSPQVR. 3 coiled-coil regions span residues 660–791, 821–876, and 919–1146; these read ELAM…LEAE, LAVL…LSAR, and SKQL…VQAQ. The disordered stretch occupies residues 1156 to 1181; the sequence is EQMGSGTQEHASHLQTQLAEQQRRTQ. A compositionally biased stretch (polar residues) spans 1159 to 1175; that stretch reads GSGTQEHASHLQTQLAE. The stretch at 1202–1278 forms a coiled coil; that stretch reads QEQYEKLMAS…EQRQKSAEKK (77 aa).

It is found in the cytoplasm. The protein localises to the cytoskeleton. The protein resides in the microtubule organizing center. It localises to the centrosome. In terms of biological role, required for the intracellular transport of organelles and vesicles, and is essential for the photoreceptor's outer segments formation, maintenance and function. The sequence is that of Ninein-like protein (Ninl) from Danio rerio (Zebrafish).